The chain runs to 442 residues: Cytokine receptor-like factor 3 (442 aa).

An N-acetylmethionine modification is found at Met-1. A coiled-coil region spans residues 10–57 (ELLLQEARENVEAAQSYRRELGHRLEGLREARRQIKESASQTRDVLKQ). Residues 181-274 (PPVQIEELIE…PQIGHSTLVP (94 aa)) enclose the Fibronectin type-III domain.

Belongs to the cytokine receptor-like factor 3 family. Expressed in several embryonic and adult tissues, including adult and fetal brain, liver, spleen and pancreas. Expressed in adult, but not fetal kidney. Expressed in skin and squamous cell carcinoma (SCC) and in several other cancer types. Also detected in lesion actinic keratosis (AK).

Its subcellular location is the cytoplasm. May play a role in the negative regulation of cell cycle progression. The chain is Cytokine receptor-like factor 3 (CRLF3) from Homo sapiens (Human).